The sequence spans 3856 residues: Hybrid PKS-NRPS synthetase traA (3856 aa).

The 433-residue stretch at 6–438 folds into the Ketosynthase family 3 (KS3) domain; the sequence is PEPIAIVGSG…GTNGHAILEE (433 aa). Active-site for beta-ketoacyl synthase activity residues include C179, H318, and H358. Residues 554–885 form a malonyl-CoA:ACP transacylase (MAT) domain region; sequence IFTGQGAQWA…FSDALGFVWT (332 aa). The interval 943 to 1081 is N-terminal hotdog fold; that stretch reads HELLGVPSPN…GKVTVIYGTP (139 aa). The segment at 943–1247 is dehydratase (DH) domain; sequence HELLGVPSPN…LSMKPFSPAT (305 aa). In terms of domain architecture, PKS/mFAS DH spans 943–1249; sequence HELLGVPSPN…MKPFSPATAD (307 aa). The Proton acceptor; for dehydratase activity role is filled by H975. The interval 1096-1249 is C-terminal hotdog fold; the sequence is MVDIQAEQFY…MKPFSPATAD (154 aa). The active-site Proton donor; for dehydratase activity is the D1156. A methyltransferase (MT) domain region spans residues 1290–1456; the sequence is LACVAQQIVH…RKAGFSGIDS (167 aa). Residues 1984–2158 are ketoreductase (KR) domain; it reads TYVLVGLSGR…ATSLDIGSIV (175 aa). Residues 2266 to 2347 form the Carrier 1 domain; it reads ADALEILKEL…TLCQQALEKL (82 aa). S2307 carries the O-(pantetheine 4'-phosphoryl)serine modification. Residues 2351–2422 form a disordered region; sequence ILPNVESGGP…SSTPATVLSN (72 aa). 2 stretches are compositionally biased toward low complexity: residues 2357–2369 and 2399–2418; these read SGGP…SKPT and TTSP…TPAT. A condensation (C) domain region spans residues 2446 to 2884; it reads VKTELVSFQQ…FALFSDKELK (439 aa). The adenylation (A) domain stretch occupies residues 2910-3310; sequence QIAKENDDKV…GAMVFHNRIA (401 aa). A disordered region spans residues 3403 to 3429; sequence SKTDRKALKELPLPQRSNHDTGDNTES. Residues 3428–3507 form the Carrier 2 domain; that stretch reads ESLTETMLEL…DMTQKIEESL (80 aa). At S3467 the chain carries O-(pantetheine 4'-phosphoryl)serine. Residues 3544–3768 form a reductase (R) domain region; the sequence is VTGSGGFLGK…EMTPIHSAAS (225 aa).

This sequence in the C-terminal section; belongs to the NRP synthetase family.

Its pathway is secondary metabolite biosynthesis. In terms of biological role, hybrid PKS-NRPS synthetase; part of the tra gene cluster that produces terrestric acid. The clavatol biosynthesis cluster cla and the terrestric acid cluster tra are both involved in the production of peniphenones and penilactones. The non-reducing PKS claF is responsible for the formation of clavatol from successive condensations of 3 malonyl-CoA units, presumably with a simple acetyl-CoA starter unit, and 2 methylation steps. The esterase claE probably collaborates with claF by catalyzing the hydrolysis of ACP-bound acyl intermediates to free the ACP from stalled intermediates. The clavatol oxidase claD then converts clavatol to hydroxyclavatol. Spontaneous dehydration of hydroxyclavatol leads to the accumulation of the highly active ortho-quinone methide. On the other hand, the PKS-NRPS hybrid traA is involved in the formation of crustosic acid, with the help of traB and traD. The polyketide synthase module (PKS) of traA is responsible for the synthesis of the polyketide backbone via the condensation of an acetyl-CoA starter unit with 3 malonyl-CoA units. The downstream nonribosomal peptide synthetase (NRPS) module then amidates the carboxyl end of the polyketide with L-malic acid. Because traA lacks a designated enoylreductase (ER) domain, the required activity is provided the enoyl reductase traG. Crustosic acid undergoes decarboxylation and isomerization to the terrestric acid, catalyzed by the 2-oxoglutarate-dependent dioxygenase traH. Both acids are further converted to the 2 gamma-butyrolactones (R)-5-methyltetronic acid and (S)-5-carboxylmethyltetronic acid, with involvement of the cytochrome P450 monooxygenase claJ. Spontaneous addition of the methide to these gamma-butyrolactones leads to peniphenone D and penilactone D, which undergo again stereospecific attacking by methide to give penilactones A and B. This is Hybrid PKS-NRPS synthetase traA from Penicillium crustosum (Blue mold fungus).